Consider the following 252-residue polypeptide: 5-oxoprolinase subunit A (252 aa).

Belongs to the LamB/PxpA family. As to quaternary structure, forms a complex composed of PxpA, PxpB and PxpC.

It catalyses the reaction 5-oxo-L-proline + ATP + 2 H2O = L-glutamate + ADP + phosphate + H(+). In terms of biological role, catalyzes the cleavage of 5-oxoproline to form L-glutamate coupled to the hydrolysis of ATP to ADP and inorganic phosphate. This is 5-oxoprolinase subunit A from Mycobacterium avium (strain 104).